A 170-amino-acid polypeptide reads, in one-letter code: ATP synthase subunit b (170 aa).

A helical membrane pass occupies residues 4 to 24; sequence ILLLGLALAPVALFASQGAVE.

The protein belongs to the ATPase B chain family. As to quaternary structure, F-type ATPases have 2 components, F(1) - the catalytic core - and F(0) - the membrane proton channel. F(1) has five subunits: alpha(3), beta(3), gamma(1), delta(1), epsilon(1). F(0) has three main subunits: a(1), b(2) and c(10-14). The alpha and beta chains form an alternating ring which encloses part of the gamma chain. F(1) is attached to F(0) by a central stalk formed by the gamma and epsilon chains, while a peripheral stalk is formed by the delta and b chains.

It localises to the cell inner membrane. F(1)F(0) ATP synthase produces ATP from ADP in the presence of a proton or sodium gradient. F-type ATPases consist of two structural domains, F(1) containing the extramembraneous catalytic core and F(0) containing the membrane proton channel, linked together by a central stalk and a peripheral stalk. During catalysis, ATP synthesis in the catalytic domain of F(1) is coupled via a rotary mechanism of the central stalk subunits to proton translocation. In terms of biological role, component of the F(0) channel, it forms part of the peripheral stalk, linking F(1) to F(0). This is ATP synthase subunit b from Aliarcobacter butzleri (strain RM4018) (Arcobacter butzleri).